The sequence spans 21 residues: Paulistine (21 aa).

C7 and C14 are joined by a disulfide. Threonine amide is present on T21.

Belongs to the sylv/frat/paul family. Post-translationally, occurs in oxidized and reduced states which are thought to adopt a compact globular and linear structure, respectively.

Its function is as follows. Induces transient hyperalgesia and paw edema in mice. Probably exerts its effects via different pathways in an oxidation state-dependent way. This is Paulistine from Polybia paulista (Neotropical social wasp).